The primary structure comprises 1244 residues: Structural polyprotein (1244 aa).

The interval 1-113 (MNSVFYNPFG…GKRQRTALKF (113 aa)) is disordered. Residues 35–44 (GLTTQIQQLT) show a composition bias toward polar residues. Residues 35–69 (GLTTQIQQLTRAVRALVLDNATRRQRPAPRTRPRK) form a host transcription inhibition region. Basic residues predominate over residues 57–81 (RRQRPAPRTRPRKPKTQKPKPKKQN). A Nuclear localization signal motif is present at residues 62-103 (APRTRPRKPKTQKPKPKKQNQKPPQQQKKGKNQPQQPKKPKP). Residues 82–97 (QKPPQQQKKGKNQPQQ) show a composition bias toward low complexity. The interval 85–118 (PQQQKKGKNQPQQPKKPKPGKRQRTALKFEADRT) is binding to the viral RNA. Residues 99–109 (KKPKPGKRQRT) are compositionally biased toward basic residues. A ribosome-binding region spans residues 103–117 (PGKRQRTALKFEADR). The Peptidase S3 domain occupies 117–267 (RTFVGKNEDG…KTTHEDTVEW (151 aa)). The Charge relay system role is filled by His-144. A Nuclear export signal motif is present at residues 149–159 (IDHPALAKLKF). Residues 160–165 (TKSSSY) are interaction with spike glycoprotein E2. Asp-166 (charge relay system) is an active-site residue. The tract at residues 188 to 198 (PEVFYNWHHGA) is dimerization of the capsid protein. Catalysis depends on Ser-218, which acts as the Charge relay system. Residues 224–228 (DNSGK) form a dimerization of the capsid protein region. The tract at residues 252-256 (KKGAA) is interaction with spike glycoprotein E2. The functions as an uncleaved signal peptide for the precursor of protein E3/E2 stretch occupies residues 268 to 280 (SRAITAMCILQNV). Residues 268-696 (SRAITAMCIL…HYYHLYPFYT (429 aa)) lie on the Extracellular side of the membrane. N-linked (GlcNAc...) asparagine; by host glycosylation is present at Asn-279. 4 cysteine pairs are disulfide-bonded: Cys-284-Cys-290, Cys-481-Cys-595, Cys-530-Cys-555, and Cys-532-Cys-549. An N-linked (GlcNAc...) asparagine; by host glycan is attached at Asn-525. Asn-647 carries N-linked (GlcNAc...) asparagine; by host glycosylation. A helical membrane pass occupies residues 697–717 (VTVLSGMGLAICAGLVISILC). Topologically, residues 718 to 751 (CCKARRDCLTPYQLAPNATVPFLVTLCCCFQRTS) are cytoplasmic. Positions 720–724 (KARRD) are interaction with the capsid protein. Residues Cys-725, Cys-745, and Cys-746 are each lipidated (S-palmitoyl cysteine; by host). Cysteines 725 and 746 form a disulfide. Residues 752–764 (ADEFTDTMGYLWQ) are Extracellular-facing. Transmembrane regions (helical) follow at residues 765–785 (HSQT…ITLV) and 786–805 (RCCS…NKAD). At 806–1218 (AYEHTITVPN…KTSWNWITAL (413 aa)) the chain is on the extracellular side. Cystine bridges form between Cys-855-Cys-920, Cys-868-Cys-900, Cys-869-Cys-902, and Cys-874-Cys-884. An E1 fusion peptide loop region spans residues 890–907 (VYPFLWGGAQCFCDSENS). N-linked (GlcNAc...) asparagine; by host glycans are attached at residues Asn-945 and Asn-1051. 4 disulfide bridges follow: Cys-1065/Cys-1077, Cys-1106/Cys-1181, Cys-1111/Cys-1185, and Cys-1133/Cys-1175. Residues 1219–1239 (MGGISSIAAIAAIVLVIALVF) form a helical membrane-spanning segment. Residues 1240–1244 (TAQHR) lie on the Cytoplasmic side of the membrane.

As to quaternary structure, homodimer. Homomultimer. Interacts with host karyopherin KPNA4; this interaction allows the nuclear import of the viral capsid protein. Interacts with spike glycoprotein E2. Interacts with host IRAK1; the interaction leads to inhibition of IRAK1-dependent signaling. In terms of assembly, the precursor of protein E3/E2 and E1 form a heterodimer shortly after synthesis. The precursor of protein E3/E2 and E1 form a heterodimer shortly after synthesis. Processing of the precursor of protein E3/E2 into E2 and E3 results in a heterodimer of the spike glycoproteins E2 and E1. Spike at virion surface are constituted of a trimer of E2-E1 heterodimers. After target cell attachment and endocytosis, E1 change conformation to form homotrimers. Interacts with 6K protein. As to quaternary structure, interacts with spike glycoprotein E1. Processing of the precursor of protein E3/E2 into E2 and E3 results in a heterodimer of the spike glycoproteins E2 and E1. Spike at virion surface are constituted of a trimer of E2-E1 heterodimers. Interacts with 6K protein. In terms of assembly, oligomer. Interacts with spike glycoprotein E1. Interacts with spike glycoprotein E2. Structural polyprotein: Specific enzymatic cleavages in vivo yield mature proteins. Capsid protein is auto-cleaved during polyprotein translation, unmasking a signal peptide at the N-terminus of the precursor of E3/E2. The remaining polyprotein is then targeted to the host endoplasmic reticulum, where host signal peptidase cleaves it into pE2, 6K and E1 proteins. pE2 is further processed to mature E3 and E2 by host furin in trans-Golgi vesicle. In terms of processing, palmitoylated via thioester bonds. These palmitoylations may induce disruption of the C-terminus transmembrane. This would result in the reorientation of E2 C-terminus from lumenal to cytoplasmic side. Post-translationally, N-glycosylated. Palmitoylated via thioester bonds.

The protein resides in the virion. The protein localises to the host cytoplasm. Its subcellular location is the host cell membrane. It is found in the host nucleus. It localises to the virion membrane. The protein resides in the host Golgi apparatus. The protein localises to the host trans-Golgi network. Its subcellular location is the host endoplasmic reticulum. The enzyme catalyses Autocatalytic release of the core protein from the N-terminus of the togavirus structural polyprotein by hydrolysis of a -Trp-|-Ser- bond.. Forms an icosahedral capsid with a T=4 symmetry composed of 240 copies of the capsid protein surrounded by a lipid membrane through which penetrate 80 spikes composed of trimers of E1-E2 heterodimers. The capsid protein binds to the viral RNA genome at a site adjacent to a ribosome binding site for viral genome translation following genome release. Possesses a protease activity that results in its autocatalytic cleavage from the nascent structural protein. Following its self-cleavage, the capsid protein transiently associates with ribosomes, and within several minutes the protein binds to viral RNA and rapidly assembles into icosahedric core particles. The resulting nucleocapsid eventually associates with the cytoplasmic domain of the spike glycoprotein E2 at the cell membrane, leading to budding and formation of mature virions. In case of infection, new virions attach to target cells and after clathrin-mediated endocytosis their membrane fuses with the host endosomal membrane. This leads to the release of the nucleocapsid into the cytoplasm, followed by an uncoating event necessary for the genomic RNA to become accessible. The uncoating might be triggered by the interaction of capsid proteins with ribosomes. Binding of ribosomes would release the genomic RNA since the same region is genomic RNA-binding and ribosome-binding. Specifically inhibits interleukin-1 receptor-associated kinase 1/IRAK1-dependent signaling during viral entry, representing a means by which the alphaviruses may evade innate immune detection and activation prior to viral gene expression. In terms of biological role, provides the signal sequence for the translocation of the precursor of protein E3/E2 to the host endoplasmic reticulum. Furin-cleaved E3 remains associated with spike glycoprotein E1 and mediates pH protection of the latter during the transport via the secretory pathway. After virion release from the host cell, the assembly protein E3 is gradually released in the extracellular space. Functionally, plays a role in viral attachment to target host cell, by binding to the cell receptor. Synthesized as a p62 precursor which is processed by furin at the cell membrane just before virion budding, giving rise to E2-E1 heterodimer. The p62-E1 heterodimer is stable, whereas E2-E1 is unstable and dissociate at low pH. p62 is processed at the last step, presumably to avoid E1 fusion activation before its final export to cell surface. E2 C-terminus contains a transitory transmembrane that would be disrupted by palmitoylation, resulting in reorientation of the C-terminal tail from lumenal to cytoplasmic side. This step is critical since E2 C-terminus is involved in budding by interacting with capsid proteins. This release of E2 C-terminus in cytoplasm occurs lately in protein export, and precludes premature assembly of particles at the endoplasmic reticulum membrane. Its function is as follows. Acts as a viroporin that participates in virus glycoprotein processing and transport to the plasma membrane, cell permeabilization and budding of viral particles. Disrupts the calcium homeostasis of the cell, probably at the endoplasmic reticulum level. This leads to cytoplasmic calcium elevation. Because of its lipophilic properties, the 6K protein is postulated to influence the selection of lipids that interact with the transmembrane domains of the glycoproteins, which, in turn, affects the deformability of the bilayer required for the extreme curvature that occurs as budding proceeds. Present in low amount in virions, about 3% compared to viral glycoproteins. Class II viral fusion protein. Fusion activity is inactive as long as E1 is bound to E2 in mature virion. After virus attachment to target cell and endocytosis, acidification of the endosome induce dissociation of E1/E2 heterodimer and concomitant trimerization of the E1 subunits. This E1 trimer is fusion active, and promotes release of viral nucleocapsid in cytoplasm after endosome and viral membrane fusion. Efficient fusion requires the presence of cholesterol and sphingolipid in the target membrane. The sequence is that of Structural polyprotein from Aedes (AURAV).